Consider the following 766-residue polypeptide: Nitrogen permease regulator 3 (766 aa).

A signal peptide spans 1 to 23 (MSSVVRPPDPCLVAIILITCSRA). Disordered regions lie at residues 33-140 (PNPS…WDSF), 186-257 (RKKR…VTDG), and 594-638 (EEAK…NATP). Residues 36-49 (SIASAPSRSNSRTK) show a composition bias toward polar residues. Positions 51 to 61 (SPRASDSSPSS) are enriched in low complexity. Over residues 62 to 74 (DNEEGSSSDEDDL) the composition is skewed to acidic residues. Residues 89–110 (RRLSSGSPSTKAASQQRKSNLG) show a composition bias toward polar residues. Composition is skewed to basic and acidic residues over residues 118-133 (ETPR…HELE) and 217-250 (GGEK…HPDE).

Belongs to the NPR3 family.

In terms of biological role, mediates inactivation of the TORC1 complex in response to amino acid starvation. Required for meiotic nuclear division. The sequence is that of Nitrogen permease regulator 3 (NPR3) from Coccidioides immitis (strain RS) (Valley fever fungus).